The primary structure comprises 348 residues: Phosphoribosylformylglycinamidine cyclo-ligase (348 aa).

This sequence belongs to the AIR synthase family.

It localises to the cytoplasm. The catalysed reaction is 2-formamido-N(1)-(5-O-phospho-beta-D-ribosyl)acetamidine + ATP = 5-amino-1-(5-phospho-beta-D-ribosyl)imidazole + ADP + phosphate + H(+). The protein operates within purine metabolism; IMP biosynthesis via de novo pathway; 5-amino-1-(5-phospho-D-ribosyl)imidazole from N(2)-formyl-N(1)-(5-phospho-D-ribosyl)glycinamide: step 2/2. The protein is Phosphoribosylformylglycinamidine cyclo-ligase of Sorangium cellulosum (strain So ce56) (Polyangium cellulosum (strain So ce56)).